A 97-amino-acid chain; its full sequence is Putative pterin-4-alpha-carbinolamine dehydratase (97 aa).

This sequence belongs to the pterin-4-alpha-carbinolamine dehydratase family.

The enzyme catalyses (4aS,6R)-4a-hydroxy-L-erythro-5,6,7,8-tetrahydrobiopterin = (6R)-L-erythro-6,7-dihydrobiopterin + H2O. This Brucella abortus (strain S19) protein is Putative pterin-4-alpha-carbinolamine dehydratase.